Reading from the N-terminus, the 166-residue chain is Small ribosomal subunit protein uS5 (166 aa).

Positions 11–74 constitute an S5 DRBM domain; that stretch reads LDDNVVAINR…EAAKKNLITV (64 aa).

This sequence belongs to the universal ribosomal protein uS5 family. As to quaternary structure, part of the 30S ribosomal subunit. Contacts proteins S4 and S8.

In terms of biological role, with S4 and S12 plays an important role in translational accuracy. Located at the back of the 30S subunit body where it stabilizes the conformation of the head with respect to the body. The sequence is that of Small ribosomal subunit protein uS5 from Lactiplantibacillus plantarum (strain ATCC BAA-793 / NCIMB 8826 / WCFS1) (Lactobacillus plantarum).